The following is a 427-amino-acid chain: Glucose-1-phosphate adenylyltransferase (427 aa).

Alpha-D-glucose 1-phosphate-binding positions include Tyr-121, Gly-186, 201–202 (EK), and Ser-219.

The protein belongs to the bacterial/plant glucose-1-phosphate adenylyltransferase family. Homotetramer.

It carries out the reaction alpha-D-glucose 1-phosphate + ATP + H(+) = ADP-alpha-D-glucose + diphosphate. It participates in glycan biosynthesis; glycogen biosynthesis. Functionally, involved in the biosynthesis of ADP-glucose, a building block required for the elongation reactions to produce glycogen. Catalyzes the reaction between ATP and alpha-D-glucose 1-phosphate (G1P) to produce pyrophosphate and ADP-Glc. This is Glucose-1-phosphate adenylyltransferase from Corynebacterium diphtheriae (strain ATCC 700971 / NCTC 13129 / Biotype gravis).